The following is a 324-amino-acid chain: Large ribosomal subunit protein uL3m (324 aa).

The N-terminal 41 residues, 1–41 (MAAVPRGLLSRINQFLSIRSITPSSSESLPHCSSFFLIRRF), are a transit peptide targeting the mitochondrion. A disordered region spans residues 206-229 (PASHGASLSHRSGGSTGQRDAPGK).

It belongs to the universal ribosomal protein uL3 family. In terms of assembly, part of the 50S ribosomal subunit.

The protein resides in the mitochondrion. One of the primary rRNA binding proteins, it binds directly near the 3'-end of the 23S rRNA, where it nucleates assembly of the 50S subunit. This is Large ribosomal subunit protein uL3m from Arabidopsis thaliana (Mouse-ear cress).